A 268-amino-acid chain; its full sequence is uncharacterized protein (268 aa).

A helical membrane pass occupies residues 150 to 172; it reads LYSIADFLAYTFTYFYLATVGLA.

The protein localises to the host membrane. This is an uncharacterized protein from Sulfolobus islandicus rod-shaped virus 1 (SIRV-1).